Consider the following 464-residue polypeptide: 3-deoxy-D-manno-octulosonic acid transferase (464 aa).

A helical; Signal-anchor transmembrane segment spans residues 2 to 22 (MLLYYALSFILLPVYFIIILI). The RPE1 insert domain maps to 47 to 93 (DSLDFMQTSANKEEFKGDTSLRTTTYTLIREDEGLGSTYKLPLEASD). Catalysis depends on Glu-107, which acts as the Proton acceptor. Residues 311–312 (PR), 352–354 (FGE), and 377–380 (NILE) each bind CMP.

It belongs to the glycosyltransferase group 1 family. Glycosyltransferase 30 subfamily.

Its subcellular location is the cell inner membrane. The enzyme catalyses lipid IVA (E. coli) + CMP-3-deoxy-beta-D-manno-octulosonate = alpha-Kdo-(2-&gt;6)-lipid IVA (E. coli) + CMP + H(+). Its pathway is bacterial outer membrane biogenesis; LPS core biosynthesis. In terms of biological role, involved in lipopolysaccharide (LPS) biosynthesis. Catalyzes the transfer of 3-deoxy-D-manno-octulosonate (Kdo) residue(s) from CMP-Kdo to lipid IV(A), the tetraacyldisaccharide-1,4'-bisphosphate precursor of lipid A. In Rickettsia conorii (strain ATCC VR-613 / Malish 7), this protein is 3-deoxy-D-manno-octulosonic acid transferase (waaA).